The sequence spans 642 residues: Threonine--tRNA ligase (642 aa).

The TGS domain maps to 1–61 (MPVVTLPDGS…DSDANLAIIT (61 aa)). The interval 243–534 (DHRKIGKQLD…LTEEYAGFFP (292 aa)) is catalytic. Cysteine 334, histidine 385, and histidine 511 together coordinate Zn(2+).

The protein belongs to the class-II aminoacyl-tRNA synthetase family. Homodimer. Zn(2+) is required as a cofactor.

It is found in the cytoplasm. It carries out the reaction tRNA(Thr) + L-threonine + ATP = L-threonyl-tRNA(Thr) + AMP + diphosphate + H(+). Catalyzes the attachment of threonine to tRNA(Thr) in a two-step reaction: L-threonine is first activated by ATP to form Thr-AMP and then transferred to the acceptor end of tRNA(Thr). Also edits incorrectly charged L-seryl-tRNA(Thr). The chain is Threonine--tRNA ligase from Photorhabdus laumondii subsp. laumondii (strain DSM 15139 / CIP 105565 / TT01) (Photorhabdus luminescens subsp. laumondii).